A 409-amino-acid chain; its full sequence is Peptidase T (409 aa).

H78 contacts Zn(2+). D80 is an active-site residue. D140 provides a ligand contact to Zn(2+). Residue E173 is the Proton acceptor of the active site. The Zn(2+) site is built by E174, D196, and H379.

This sequence belongs to the peptidase M20B family. The cofactor is Zn(2+).

Its subcellular location is the cytoplasm. The catalysed reaction is Release of the N-terminal residue from a tripeptide.. In terms of biological role, cleaves the N-terminal amino acid of tripeptides. The chain is Peptidase T from Salmonella choleraesuis (strain SC-B67).